The sequence spans 123 residues: N(4)-acetylcytidine amidohydrolase (123 aa).

Positions 6 to 101 (ITFYQRFEAD…EIIFWVIQFS (96 aa)) constitute an ASCH domain. K21 acts as the Proton acceptor in catalysis. S24 (nucleophile) is an active-site residue. The active-site Proton donor is E74.

This sequence belongs to the N(4)-acetylcytidine amidohydrolase family.

It carries out the reaction N(4)-acetylcytidine + H2O = cytidine + acetate + H(+). The catalysed reaction is N(4)-acetyl-2'-deoxycytidine + H2O = 2'-deoxycytidine + acetate + H(+). It catalyses the reaction N(4)-acetylcytosine + H2O = cytosine + acetate + H(+). In terms of biological role, catalyzes the hydrolysis of N(4)-acetylcytidine (ac4C). This chain is N(4)-acetylcytidine amidohydrolase, found in Haemophilus influenzae (strain ATCC 51907 / DSM 11121 / KW20 / Rd).